The sequence spans 544 residues: Methionine--tRNA ligase 1 (544 aa).

Positions 10-20 (PYANGSLHLGH) match the 'HIGH' region motif. Residues Cys-141, Cys-144, Cys-153, and Cys-156 each coordinate Zn(2+). The 'KMSKS' region motif lies at 329–333 (KLSTS). An ATP-binding site is contributed by Thr-332.

The protein belongs to the class-I aminoacyl-tRNA synthetase family. MetG type 1 subfamily. Monomer. Requires Zn(2+) as cofactor.

The protein localises to the cytoplasm. It carries out the reaction tRNA(Met) + L-methionine + ATP = L-methionyl-tRNA(Met) + AMP + diphosphate. Is required not only for elongation of protein synthesis but also for the initiation of all mRNA translation through initiator tRNA(fMet) aminoacylation. This is Methionine--tRNA ligase 1 from Bacillus cereus (strain ATCC 10987 / NRS 248).